The sequence spans 32 residues: ilv operon leader peptide (32 aa).

In terms of biological role, this protein is involved in control of the biosynthesis of isoleucine, leucine, and valine. The sequence is that of ilv operon leader peptide (ivbL) from Escherichia coli (strain K12).